The chain runs to 332 residues: Small ribosomal subunit biogenesis GTPase RsgA (332 aa).

Positions 103–259 constitute a CP-type G domain; that stretch reads RQQLIAANLD…LIDTPGMREL (157 aa). GTP contacts are provided by residues 148–151 and 201–209; these read TKVD and GSSGAGKST. Residues Cys-281, Cys-286, His-288, and Cys-294 each coordinate Zn(2+).

Belongs to the TRAFAC class YlqF/YawG GTPase family. RsgA subfamily. Monomer. Associates with 30S ribosomal subunit, binds 16S rRNA. The cofactor is Zn(2+).

The protein localises to the cytoplasm. Its function is as follows. One of several proteins that assist in the late maturation steps of the functional core of the 30S ribosomal subunit. Helps release RbfA from mature subunits. May play a role in the assembly of ribosomal proteins into the subunit. Circularly permuted GTPase that catalyzes slow GTP hydrolysis, GTPase activity is stimulated by the 30S ribosomal subunit. The sequence is that of Small ribosomal subunit biogenesis GTPase RsgA from Xylella fastidiosa (strain M23).